The sequence spans 228 residues: Cytidylate kinase (228 aa).

ATP is bound at residue 7 to 15 (GPVATGKST).

It belongs to the cytidylate kinase family. Type 1 subfamily.

Its subcellular location is the cytoplasm. The enzyme catalyses CMP + ATP = CDP + ADP. It catalyses the reaction dCMP + ATP = dCDP + ADP. The protein is Cytidylate kinase of Protochlamydia amoebophila (strain UWE25).